The following is a 201-amino-acid chain: LexA repressor 1 (201 aa).

The segment at residues 27 to 47 (LAEIAQAFGFASRNAAQKHVQ) is a DNA-binding region (H-T-H motif). Catalysis depends on for autocatalytic cleavage activity residues Ser-122 and Lys-159.

The protein belongs to the peptidase S24 family. In terms of assembly, homodimer.

The catalysed reaction is Hydrolysis of Ala-|-Gly bond in repressor LexA.. In terms of biological role, represses a number of genes involved in the response to DNA damage (SOS response), including recA and lexA. In the presence of single-stranded DNA, RecA interacts with LexA causing an autocatalytic cleavage which disrupts the DNA-binding part of LexA, leading to derepression of the SOS regulon and eventually DNA repair. In Xanthomonas campestris pv. campestris (strain ATCC 33913 / DSM 3586 / NCPPB 528 / LMG 568 / P 25), this protein is LexA repressor 1.